We begin with the raw amino-acid sequence, 315 residues long: Hydrogenase-4 component C (315 aa).

Residues Met1–Leu10 are Periplasmic-facing. The chain crosses the membrane as a helical span at residues Val11–Ile31. The Cytoplasmic portion of the chain corresponds to Ser32–Arg73. Residues Leu74–Ile94 traverse the membrane as a helical segment. The Periplasmic portion of the chain corresponds to Thr95 to Pro98. The chain crosses the membrane as a helical span at residues Phe99–Phe119. Residues Ala120–Thr140 lie on the Cytoplasmic side of the membrane. The chain crosses the membrane as a helical span at residues Leu141–Gly161. At Ser162–Thr181 the chain is on the periplasmic side. The helical transmembrane segment at Thr182–Phe202 threads the bilayer. Topologically, residues Asp203–Lys228 are cytoplasmic. A helical transmembrane segment spans residues Trp229–Phe249. Over Gly250–Ser256 the chain is Periplasmic. A helical membrane pass occupies residues Leu257 to Leu277. Residues Ala278–Arg289 lie on the Cytoplasmic side of the membrane. The chain crosses the membrane as a helical span at residues Phe290–Phe310. The Periplasmic portion of the chain corresponds to Trp311–Leu315.

Belongs to the complex I subunit 1 family.

The protein localises to the cell inner membrane. In terms of biological role, possible component of hydrogenase 4. The polypeptide is Hydrogenase-4 component C (Escherichia coli (strain K12)).